Consider the following 621-residue polypeptide: Stimulated by retinoic acid gene 6 protein-like (621 aa).

Topologically, residues 1 to 21 are extracellular; sequence MLAASTRTRQINITCDNPVDR. N-linked (GlcNAc...) asparagine glycosylation is present at Asn-12. The chain crosses the membrane as a helical span at residues 22 to 42; the sequence is EVFLHYSLIPSLCIILVLSFL. The Cytoplasmic segment spans residues 43 to 53; it reads QRREHRRQRDD. The helical transmembrane segment at 54–74 threads the bilayer; that stretch reads TSYLLGNHFGIIVPLDFVGTF. Residues 75–110 lie on the Extracellular side of the membrane; that stretch reads SNRWSYGAAFGATANKVMFLFSEGYQPLTVPQWAQA. Residues 111 to 131 form a helical membrane-spanning segment; the sequence is FVLFIGGMEVGLSYFPFFACL. The Cytoplasmic portion of the chain corresponds to 132 to 137; sequence SSEFQL. The chain crosses the membrane as a helical span at residues 138–158; it reads VSSILGFSYSLTWFVVTVLQI. Residues 159 to 173 are Extracellular-facing; it reads SQCPHGQFLGRFETL. Residues 174 to 194 traverse the membrane as a helical segment; the sequence is VFYWPSLLCLGFLLGRFLHMF. Over 195–258 the chain is Cytoplasmic; sequence LKALPVHLGL…CFQFPSRMVG (64 aa). The chain crosses the membrane as a helical span at residues 259-279; sequence TLLLAFICLYLFIVIEFCVFL. At 280-321 the chain is on the extracellular side; the sequence is HVRDKLDMFEDKLESYLTHMNETGTLTPIILQVKELISVTKG. Residues 322–342 traverse the membrane as a helical segment; it reads VWVVTILPAALTCVTYLFHIL. Residues 343 to 383 lie on the Cytoplasmic side of the membrane; it reads ACYRKHMKRLWAGDKHFLPQKFHSPSSAASVVAIARYSGWQ. The helical transmembrane segment at 384–404 threads the bilayer; the sequence is IAYILWGYLIIHVVQSLCGVM. At 405–424 the chain is on the extracellular side; it reads LMYGLVLPIIHHRGLEMLQG. A helical membrane pass occupies residues 425–445; sequence FGLGVLTLSIVVGLIILQVWI. Over 446-476 the chain is Cytoplasmic; sequence AGTFFLQPKLGTSDKQKPLALNNRRAFHNFN. A helical membrane pass occupies residues 477-497; it reads YFLFFYNVLLGLGACLSRLLI. Topologically, residues 498–621 are extracellular; sequence SCLLGTWLIA…TQILLTCSDC (124 aa). Position 612 is a phosphothreonine (Thr-612).

Post-translationally, glycosylated. As to expression, highly expressed in liver and small intestine. Also expressed in spleen, kidney, colon, stomach, placenta, adipose tissue and isolated adipocytes.

The protein resides in the cell membrane. Acts as a high-affinity cell-surface receptor for retinol-binding protein RBP4 and mediates RBP4-dependent retinol uptake in the liver. This chain is Stimulated by retinoic acid gene 6 protein-like, found in Mus musculus (Mouse).